Consider the following 456-residue polypeptide: Chromosomal replication initiator protein DnaA (456 aa).

The tract at residues 1–83 (MTASLWQQCL…LRFDIGNRPH (83 aa)) is domain I, interacts with DnaA modulators. The segment at 83 to 119 (HPVAIARAPARGAAPVNNLQKSWESKADAKPEPNHKS) is domain II. The domain III, AAA+ region stretch occupies residues 120 to 336 (NTNVNYTFEN…GALNRVIANA (217 aa)). Positions 164, 166, 167, and 168 each coordinate ATP. The segment at 337-456 (NFTGRAINID…YSNLIRTLSS (120 aa)) is domain IV, binds dsDNA.

It belongs to the DnaA family. In terms of assembly, oligomerizes as a right-handed, spiral filament on DNA at oriC.

Its subcellular location is the cytoplasm. Functionally, plays an essential role in the initiation and regulation of chromosomal replication. ATP-DnaA binds to the origin of replication (oriC) to initiate formation of the DNA replication initiation complex once per cell cycle. Binds the DnaA box (a 9 base pair repeat at the origin) and separates the double-stranded (ds)DNA. Forms a right-handed helical filament on oriC DNA; dsDNA binds to the exterior of the filament while single-stranded (ss)DNA is stabiized in the filament's interior. The ATP-DnaA-oriC complex binds and stabilizes one strand of the AT-rich DNA unwinding element (DUE), permitting loading of DNA polymerase. After initiation quickly degrades to an ADP-DnaA complex that is not apt for DNA replication. Binds acidic phospholipids. This Aeromonas salmonicida (strain A449) protein is Chromosomal replication initiator protein DnaA.